The sequence spans 155 residues: 6,7-dimethyl-8-ribityllumazine synthase (155 aa).

Residues phenylalanine 23, 57–59 (AFE), and 81–83 (AVI) each bind 5-amino-6-(D-ribitylamino)uracil. 86–87 (AT) lines the (2S)-2-hydroxy-3-oxobutyl phosphate pocket. Catalysis depends on histidine 89, which acts as the Proton donor. Phenylalanine 114 provides a ligand contact to 5-amino-6-(D-ribitylamino)uracil. Arginine 128 contributes to the (2S)-2-hydroxy-3-oxobutyl phosphate binding site.

Belongs to the DMRL synthase family.

It catalyses the reaction (2S)-2-hydroxy-3-oxobutyl phosphate + 5-amino-6-(D-ribitylamino)uracil = 6,7-dimethyl-8-(1-D-ribityl)lumazine + phosphate + 2 H2O + H(+). Its pathway is cofactor biosynthesis; riboflavin biosynthesis; riboflavin from 2-hydroxy-3-oxobutyl phosphate and 5-amino-6-(D-ribitylamino)uracil: step 1/2. Functionally, catalyzes the formation of 6,7-dimethyl-8-ribityllumazine by condensation of 5-amino-6-(D-ribitylamino)uracil with 3,4-dihydroxy-2-butanone 4-phosphate. This is the penultimate step in the biosynthesis of riboflavin. The polypeptide is 6,7-dimethyl-8-ribityllumazine synthase (Pelotomaculum thermopropionicum (strain DSM 13744 / JCM 10971 / SI)).